The following is a 120-amino-acid chain: UPF0295 protein Exig_0660 (120 aa).

Transmembrane regions (helical) follow at residues A16–F36 and V41–I61.

This sequence belongs to the UPF0295 family.

It localises to the cell membrane. This chain is UPF0295 protein Exig_0660, found in Exiguobacterium sibiricum (strain DSM 17290 / CCUG 55495 / CIP 109462 / JCM 13490 / 255-15).